The sequence spans 501 residues: Ribose import ATP-binding protein RbsA (501 aa).

ABC transporter domains lie at 5-241 (LSLE…VGRK) and 252-498 (LRND…TGGV). 37 to 44 (GENGAGKS) provides a ligand contact to ATP.

It belongs to the ABC transporter superfamily. Ribose importer (TC 3.A.1.2.1) family. In terms of assembly, the complex is composed of an ATP-binding protein (RbsA), two transmembrane proteins (RbsC) and a solute-binding protein (RbsB).

It localises to the cell inner membrane. It carries out the reaction D-ribose(out) + ATP + H2O = D-ribose(in) + ADP + phosphate + H(+). Part of the ABC transporter complex RbsABC involved in ribose import. Responsible for energy coupling to the transport system. This chain is Ribose import ATP-binding protein RbsA, found in Hahella chejuensis (strain KCTC 2396).